Here is a 188-residue protein sequence, read N- to C-terminus: Elongation factor P (188 aa).

An N6-(3,6-diaminohexanoyl)-5-hydroxylysine modification is found at Lys-34.

The protein belongs to the elongation factor P family. May be beta-lysylated on the epsilon-amino group of Lys-34 by the combined action of EpmA and EpmB, and then hydroxylated on the C5 position of the same residue by EpmC (if this protein is present). Lysylation is critical for the stimulatory effect of EF-P on peptide-bond formation. The lysylation moiety may extend toward the peptidyltransferase center and stabilize the terminal 3-CCA end of the tRNA. Hydroxylation of the C5 position on Lys-34 may allow additional potential stabilizing hydrogen-bond interactions with the P-tRNA.

The protein resides in the cytoplasm. It participates in protein biosynthesis; polypeptide chain elongation. Involved in peptide bond synthesis. Alleviates ribosome stalling that occurs when 3 or more consecutive Pro residues or the sequence PPG is present in a protein, possibly by augmenting the peptidyl transferase activity of the ribosome. Modification of Lys-34 is required for alleviation. The chain is Elongation factor P from Actinobacillus pleuropneumoniae serotype 5b (strain L20).